A 149-amino-acid polypeptide reads, in one-letter code: UPF0756 membrane protein BBR47_12340 (149 aa).

4 helical membrane passes run 6-26 (IILLVIALLSLVAKDLVLVYA), 48-68 (PMFHVGLFCLMVFLLIPIAKG), 86-106 (IAILAGFIISYVGGKGLSILP), and 120-140 (LLAVLLSNGLPAGLIIAAGCI).

The protein belongs to the UPF0756 family.

Its subcellular location is the cell membrane. The chain is UPF0756 membrane protein BBR47_12340 from Brevibacillus brevis (strain 47 / JCM 6285 / NBRC 100599).